The chain runs to 165 residues: MSSHYKYPLIFTAFLLIAFCLIFFSYHLIHHVRLEYPNWQGESKDQNWEAVFTKNEDAPNEYSGKLYWIGDTIEIDNTYLESLIVKKDDEVLLSSDTEIPMHDYAGGTFSDGSAKEKSVSFLERLDEHELEGHDITIEVKWKQGNHYSASQLTLNEKTLFDEKQQ.

A helical transmembrane segment spans residues 7-29 (YPLIFTAFLLIAFCLIFFSYHLI).

Its subcellular location is the membrane. This is an uncharacterized protein from Bacillus subtilis (strain 168).